The sequence spans 255 residues: Hydroxyacylglutathione hydrolase (255 aa).

7 residues coordinate Zn(2+): His56, His58, Asp60, His61, His114, Asp133, and His171.

Belongs to the metallo-beta-lactamase superfamily. Glyoxalase II family. Monomer. Zn(2+) is required as a cofactor.

It carries out the reaction an S-(2-hydroxyacyl)glutathione + H2O = a 2-hydroxy carboxylate + glutathione + H(+). It participates in secondary metabolite metabolism; methylglyoxal degradation; (R)-lactate from methylglyoxal: step 2/2. Thiolesterase that catalyzes the hydrolysis of S-D-lactoyl-glutathione to form glutathione and D-lactic acid. The protein is Hydroxyacylglutathione hydrolase of Bradyrhizobium sp. (strain BTAi1 / ATCC BAA-1182).